A 366-amino-acid chain; its full sequence is Spermine synthase (366 aa).

Position 2 is an N-acetylalanine (Ala2). At Ser57 the chain carries Phosphoserine. In terms of domain architecture, PABS spans Arg122–Lys362. Gln148 is an S-adenosyl 3-(methylsulfanyl)propylamine binding site. 2 residues coordinate spermidine: Tyr177 and Asp201. S-adenosyl 3-(methylsulfanyl)propylamine-binding positions include Glu220 and Asp255–Cys256. Catalysis depends on Asp276, which acts as the Proton acceptor. Spermidine contacts are provided by Tyr351 and Glu353.

It belongs to the spermidine/spermine synthase family. In terms of assembly, homodimer. Dimerization is mediated through the N-terminal domain and seems to be required for activity as deletion of the N-terminal domain causes complete loss of activity.

It catalyses the reaction S-adenosyl 3-(methylsulfanyl)propylamine + spermidine = spermine + S-methyl-5'-thioadenosine + H(+). It functions in the pathway amine and polyamine biosynthesis; spermine biosynthesis; spermine from spermidine: step 1/1. In terms of biological role, catalyzes the production of spermine from spermidine and decarboxylated S-adenosylmethionine (dcSAM). This chain is Spermine synthase, found in Homo sapiens (Human).